The sequence spans 460 residues: Elongation factor 1-alpha (460 aa).

Gly2 is subject to N,N,N-trimethylglycine. N6,N6-dimethyllysine; alternate is present on Lys3. At Lys3 the chain carries N6-methyllysine; alternate. Positions Lys5–Ser240 constitute a tr-type G domain. Residues Gly14–Ser21 are G1. GTP is bound at residue Gly14 to Ser21. Lys30 carries the N6-methyllysine modification. Residues Gly70–Asp74 form a G2 region. Lys79 carries the post-translational modification N6,N6,N6-trimethyllysine. The interval Asp91–Gly94 is G3. Residues Asp91 to His95 and Asn153 to Asp156 each bind GTP. Residues Asn153–Asp156 form a G4 region. The G5 stretch occupies residues Ser192–Trp194. Lys316 carries the N6,N6-dimethyllysine; alternate modification. Position 316 is an N6-methyllysine; alternate (Lys316). The residue at position 390 (Lys390) is an N6-methyllysine.

Belongs to the TRAFAC class translation factor GTPase superfamily. Classic translation factor GTPase family. EF-Tu/EF-1A subfamily.

The protein localises to the cytoplasm. In terms of biological role, this protein promotes the GTP-dependent binding of aminoacyl-tRNA to the A-site of ribosomes during protein biosynthesis. This is Elongation factor 1-alpha (TEF1) from Schizophyllum commune (Split gill fungus).